Here is a 447-residue protein sequence, read N- to C-terminus: MIKIKKGLDLPIAGAPVQTIQDGPAIHHVALLGEEYVGMRPSMLVQEGDQVKKGQALFEDKKNPGVLFTAPASGKISAINRGERRVLQSVVIEVEGDEQIPFEHYAAEELNQLSDEQVQHHLLTSGLWTALRTRPFSKTPVPGSRPRAIFISAMDTQPLAADPQVIIATESEAFNHGLTVLTRLTDGKVHVCHAAGQAVTRHTNTQVTYNEFSGPHPAGLVGTHIHFLEPVSQTKMVWHVGYQDVIAIGKLFTRGELCTDRIVALAGPQVNQPILLRTRLGASLSELTAGKLKEGDNRIISGSVLSGTAFSATHGYLGRFHQQVSVIREGREKELFGWVMPGRDKYSITRTTLGYFFKRKLFAFSTDMHGGERAMVPIGNYERVMPLDILATHLLRDLLAGDTDSAQALGCLELDEEDLALCTFVCPGKYEYGPVLRDILTQIEQEG.

It belongs to the NqrA family. In terms of assembly, composed of six subunits; NqrA, NqrB, NqrC, NqrD, NqrE and NqrF.

It carries out the reaction a ubiquinone + n Na(+)(in) + NADH + H(+) = a ubiquinol + n Na(+)(out) + NAD(+). NQR complex catalyzes the reduction of ubiquinone-1 to ubiquinol by two successive reactions, coupled with the transport of Na(+) ions from the cytoplasm to the periplasm. NqrA to NqrE are probably involved in the second step, the conversion of ubisemiquinone to ubiquinol. The sequence is that of Na(+)-translocating NADH-quinone reductase subunit A from Yersinia pestis bv. Antiqua (strain Angola).